A 307-amino-acid chain; its full sequence is UDP-N-acetylenolpyruvoylglucosamine reductase (307 aa).

The FAD-binding PCMH-type domain maps to R29 to G197. R176 is an active-site residue. S227 functions as the Proton donor in the catalytic mechanism. Residue E297 is part of the active site.

This sequence belongs to the MurB family. Requires FAD as cofactor.

It is found in the cytoplasm. It catalyses the reaction UDP-N-acetyl-alpha-D-muramate + NADP(+) = UDP-N-acetyl-3-O-(1-carboxyvinyl)-alpha-D-glucosamine + NADPH + H(+). The protein operates within cell wall biogenesis; peptidoglycan biosynthesis. Cell wall formation. The polypeptide is UDP-N-acetylenolpyruvoylglucosamine reductase (Prochlorococcus marinus (strain MIT 9313)).